The sequence spans 395 residues: Elongation factor Tu (395 aa).

The tr-type G domain occupies 10–205; the sequence is KPHVNIGTIG…VDSYIPLPPR (196 aa). Residues 19–26 form a G1 region; it reads GHVDHGKT. 19–26 is a binding site for GTP; that stretch reads GHVDHGKT. Thr-26 serves as a coordination point for Mg(2+). The segment at 60–64 is G2; sequence GITIN. The tract at residues 81–84 is G3; that stretch reads DCPG. GTP-binding positions include 81 to 85 and 136 to 139; these read DCPGH and NKVD. Residues 136–139 form a G4 region; it reads NKVD. A G5 region spans residues 174 to 176; the sequence is SAT.

Belongs to the TRAFAC class translation factor GTPase superfamily. Classic translation factor GTPase family. EF-Tu/EF-1A subfamily. In terms of assembly, monomer.

The protein localises to the cytoplasm. The enzyme catalyses GTP + H2O = GDP + phosphate + H(+). GTP hydrolase that promotes the GTP-dependent binding of aminoacyl-tRNA to the A-site of ribosomes during protein biosynthesis. This chain is Elongation factor Tu, found in Terrimonas ferruginea (Flavobacterium ferrugineum).